Consider the following 489-residue polypeptide: Cysteine--tRNA ligase (489 aa).

C27 serves as a coordination point for Zn(2+). A 'HIGH' region motif is present at residues 29 to 39 (VTVYDLCHLGH). Zn(2+)-binding residues include C211, H236, and E240. Residues 268–272 (KMSKS) carry the 'KMSKS' region motif. K271 serves as a coordination point for ATP.

It belongs to the class-I aminoacyl-tRNA synthetase family. Monomer. It depends on Zn(2+) as a cofactor.

It is found in the cytoplasm. The enzyme catalyses tRNA(Cys) + L-cysteine + ATP = L-cysteinyl-tRNA(Cys) + AMP + diphosphate. This Prochlorococcus marinus (strain AS9601) protein is Cysteine--tRNA ligase.